The chain runs to 136 residues: MTDRLSPERRRYLMQQVRSKNTRPEKAVRSLLHSIGYRFRLHRKDLPGTPDIVFPSRRLVLFVHGCFWHGHGCRIGQLPKSRLDYWSPKIEANRARDQRKEAALAAEGWRVAVVWQCELSDLGALEARLRNILDPS.

This sequence belongs to the Vsr family.

May nick XorII sequences that contain T/G mispairs resulting from m5C-deamination. If unrepaired, these mismatches can lead to C-to-T transition mutations. The very short patch (VSP) repair process counteracts the mutagenic process by repairing the mismatches in favor of the G-containing strand. This enzyme is an endonuclease that nicks double-stranded DNA within the sequence CGATCG (C-methylation site unknown) next to the thymidine residue that is mismatched to 2'-deoxyguanosine. The incision is mismatch-dependent and strand-specific. The chain is Type II nicking enzyme V.XorIIP from Xanthomonas oryzae pv. oryzae (strain KACC10331 / KXO85).